A 461-amino-acid polypeptide reads, in one-letter code: Siroheme synthase (461 aa).

Residues 1 to 204 (MDYFPIFCQL…GDTTQAQQQV (204 aa)) form a precorrin-2 dehydrogenase /sirohydrochlorin ferrochelatase region. NAD(+) is bound by residues 22-23 (EV) and 43-44 (GR). Serine 128 is subject to Phosphoserine. The segment at 216-461 (GEVTLVGAGP…NWFRCEAASA (246 aa)) is uroporphyrinogen-III C-methyltransferase. Proline 225 serves as a coordination point for S-adenosyl-L-methionine. The active-site Proton acceptor is aspartate 248. The active-site Proton donor is lysine 270. S-adenosyl-L-methionine-binding positions include 301–303 (GGD), isoleucine 306, 331–332 (TA), methionine 382, and glycine 411.

The protein in the N-terminal section; belongs to the precorrin-2 dehydrogenase / sirohydrochlorin ferrochelatase family. This sequence in the C-terminal section; belongs to the precorrin methyltransferase family.

It catalyses the reaction uroporphyrinogen III + 2 S-adenosyl-L-methionine = precorrin-2 + 2 S-adenosyl-L-homocysteine + H(+). It carries out the reaction precorrin-2 + NAD(+) = sirohydrochlorin + NADH + 2 H(+). The catalysed reaction is siroheme + 2 H(+) = sirohydrochlorin + Fe(2+). Its pathway is cofactor biosynthesis; adenosylcobalamin biosynthesis; precorrin-2 from uroporphyrinogen III: step 1/1. It participates in cofactor biosynthesis; adenosylcobalamin biosynthesis; sirohydrochlorin from precorrin-2: step 1/1. It functions in the pathway porphyrin-containing compound metabolism; siroheme biosynthesis; precorrin-2 from uroporphyrinogen III: step 1/1. The protein operates within porphyrin-containing compound metabolism; siroheme biosynthesis; siroheme from sirohydrochlorin: step 1/1. Its pathway is porphyrin-containing compound metabolism; siroheme biosynthesis; sirohydrochlorin from precorrin-2: step 1/1. In terms of biological role, multifunctional enzyme that catalyzes the SAM-dependent methylations of uroporphyrinogen III at position C-2 and C-7 to form precorrin-2 via precorrin-1. Then it catalyzes the NAD-dependent ring dehydrogenation of precorrin-2 to yield sirohydrochlorin. Finally, it catalyzes the ferrochelation of sirohydrochlorin to yield siroheme. In Edwardsiella ictaluri (strain 93-146), this protein is Siroheme synthase.